A 278-amino-acid polypeptide reads, in one-letter code: Pantothenate synthetase (278 aa).

26–33 (MGNLHEGH) serves as a coordination point for ATP. His-33 (proton donor) is an active-site residue. (R)-pantoate is bound at residue Gln-57. Residue Gln-57 participates in beta-alanine binding. Residue 144–147 (GKKD) coordinates ATP. Gln-150 is a (R)-pantoate binding site. Residues Gly-173 and 181-184 (LSSR) contribute to the ATP site.

This sequence belongs to the pantothenate synthetase family. Homodimer.

It is found in the cytoplasm. It carries out the reaction (R)-pantoate + beta-alanine + ATP = (R)-pantothenate + AMP + diphosphate + H(+). It functions in the pathway cofactor biosynthesis; (R)-pantothenate biosynthesis; (R)-pantothenate from (R)-pantoate and beta-alanine: step 1/1. Catalyzes the condensation of pantoate with beta-alanine in an ATP-dependent reaction via a pantoyl-adenylate intermediate. This Neisseria meningitidis serogroup A / serotype 4A (strain DSM 15465 / Z2491) protein is Pantothenate synthetase.